Consider the following 264-residue polypeptide: Thymidylate synthase (264 aa).

Residue R21 coordinates dUMP. H51 is a (6R)-5,10-methylene-5,6,7,8-tetrahydrofolate binding site. 126–127 is a dUMP binding site; the sequence is RR. The active-site Nucleophile is the C146. DUMP contacts are provided by residues 166 to 169, N177, and 207 to 209; these read RSAD and HIY. D169 contributes to the (6R)-5,10-methylene-5,6,7,8-tetrahydrofolate binding site. Residue A263 participates in (6R)-5,10-methylene-5,6,7,8-tetrahydrofolate binding.

It belongs to the thymidylate synthase family. Bacterial-type ThyA subfamily. In terms of assembly, homodimer.

Its subcellular location is the cytoplasm. The catalysed reaction is dUMP + (6R)-5,10-methylene-5,6,7,8-tetrahydrofolate = 7,8-dihydrofolate + dTMP. The protein operates within pyrimidine metabolism; dTTP biosynthesis. Functionally, catalyzes the reductive methylation of 2'-deoxyuridine-5'-monophosphate (dUMP) to 2'-deoxythymidine-5'-monophosphate (dTMP) while utilizing 5,10-methylenetetrahydrofolate (mTHF) as the methyl donor and reductant in the reaction, yielding dihydrofolate (DHF) as a by-product. This enzymatic reaction provides an intracellular de novo source of dTMP, an essential precursor for DNA biosynthesis. The protein is Thymidylate synthase of Ruminiclostridium cellulolyticum (strain ATCC 35319 / DSM 5812 / JCM 6584 / H10) (Clostridium cellulolyticum).